The following is a 614-amino-acid chain: Vitamin B12 transporter BtuB (614 aa).

Positions 1–20 (MIKKASLLTACSVTAFSAWA) are cleaved as a signal peptide. The TonB box motif lies at 26-33 (DTLVVTAN). Residues 38–152 (PRSTVLAPTT…IGGVVNIITT (115 aa)) enclose the TBDR plug domain. Cyanocob(III)alamin is bound by residues Leu-83, Ser-85, Asn-92, and 110–111 (VS). Residues 155-614 (EPGTEISAGW…EYTLSGSYTF (460 aa)) form the TBDR beta-barrel domain. Beta stranded transmembrane passes span 158-165 (TEISAGWG), 169-178 (YQNYDVSTQQ), and 184-195 (TRVTLLGDYAHT). Residues Asp-199, Gln-211, Asp-213, and Asp-215 each coordinate Ca(2+). The next 2 beta stranded transmembrane spans lie at 217-227 (FLSKTLYGALE) and 232-248 (DAWS…NRTN). Ca(2+)-binding residues include Tyr-249 and Asp-250. Position 251 (Ala-251) interacts with cyanocob(III)alamin. Residue Asp-261 participates in Ca(2+) binding. 14 consecutive transmembrane segments (beta stranded) span residues 263–277 (RKLY…LRYN), 279–296 (ELIK…KDYN), 309–325 (TLDE…NNVI), 328–337 (HGSIGAGVDW), 353–369 (YDQR…QQVG), 371–381 (FTFEGAARNDD), 385–400 (FGRH…WEFI), 403–417 (YRFI…KAPN), 434–443 (KSKQWEGAFE), 449–458 (VNWRISGYRN), 473–490 (YYNE…TANF), 494–509 (PLTH…ARNA), 517–529 (RRAK…QLDW), and 535–550 (DWGI…YDKD). Position 309 (Thr-309) interacts with cyanocob(III)alamin. Arg-517 provides a ligand contact to cyanocob(III)alamin. Tyr-551 serves as a coordination point for cyanocob(III)alamin. Beta stranded transmembrane passes span 558-572 (TVKM…LAVA), 585-596 (IANLFDKDYETV), and 602-614 (AGRE…SYTF). The short motif at 597–614 (YGYQTAGREYTLSGSYTF) is the TonB C-terminal box element.

This sequence belongs to the TonB-dependent receptor family. BtuB (TC 1.B.14.3.1) subfamily.

It localises to the cell outer membrane. In terms of biological role, involved in the active translocation of vitamin B12 (cyanocobalamin) across the outer membrane to the periplasmic space. It derives its energy for transport by interacting with the trans-periplasmic membrane protein TonB. This Escherichia coli O139:H28 (strain E24377A / ETEC) protein is Vitamin B12 transporter BtuB.